A 374-amino-acid polypeptide reads, in one-letter code: UPF0674 endoplasmic reticulum membrane protein C2G5.01 (374 aa).

A helical transmembrane segment spans residues 49-68 (FRLEFVILACFFLYVFSFIT). N287 carries an N-linked (GlcNAc...) asparagine glycan. Positions 335-374 (KAAKKKVKSSGDISKLSESDQKKRMERERQRKMRRRAKKM) are disordered. The span at 349–363 (KLSESDQKKRMERER) shows a compositional bias: basic and acidic residues. Positions 364–374 (QRKMRRRAKKM) are enriched in basic residues.

This sequence belongs to the UPF0674 family.

It localises to the endoplasmic reticulum membrane. The sequence is that of UPF0674 endoplasmic reticulum membrane protein C2G5.01 from Schizosaccharomyces pombe (strain 972 / ATCC 24843) (Fission yeast).